A 335-amino-acid polypeptide reads, in one-letter code: Glyceraldehyde-3-phosphate dehydrogenase (335 aa).

NAD(+)-binding positions include arginine 10–isoleucine 11, aspartate 33, arginine 77, and serine 119. D-glyceraldehyde 3-phosphate-binding positions include serine 150–threonine 152, threonine 181, threonine 210–glycine 211, and arginine 233. Catalysis depends on cysteine 151, which acts as the Nucleophile. Residue asparagine 315 participates in NAD(+) binding.

Belongs to the glyceraldehyde-3-phosphate dehydrogenase family. As to quaternary structure, homotetramer.

The protein localises to the cytoplasm. The catalysed reaction is D-glyceraldehyde 3-phosphate + phosphate + NAD(+) = (2R)-3-phospho-glyceroyl phosphate + NADH + H(+). Its pathway is carbohydrate degradation; glycolysis; pyruvate from D-glyceraldehyde 3-phosphate: step 1/5. Functionally, catalyzes the oxidative phosphorylation of glyceraldehyde 3-phosphate (G3P) to 1,3-bisphosphoglycerate (BPG) using the cofactor NAD. The first reaction step involves the formation of a hemiacetal intermediate between G3P and a cysteine residue, and this hemiacetal intermediate is then oxidized to a thioester, with concomitant reduction of NAD to NADH. The reduced NADH is then exchanged with the second NAD, and the thioester is attacked by a nucleophilic inorganic phosphate to produce BPG. This is Glyceraldehyde-3-phosphate dehydrogenase (gap) from Chlamydia pneumoniae (Chlamydophila pneumoniae).